The primary structure comprises 558 residues: Factor VII-activating protease (558 aa).

The first 23 residues, 1–23 (MFVRMLVFRVLLLIALVGKSVIG), serve as a signal peptide directing secretion. EGF-like domains lie at 71-107 (DDDP…SRCQ), 109-146 (AQNK…PDCS), and 148-186 (VLPA…KFCE). Disulfide bonds link C75/C86, C80/C95, C97/C106, C113/C123, C118/C134, C136/C145, C152/C163, C157/C174, C176/C185, C192/C274, C213/C255, C244/C269, C299/C433, C345/C361, C353/C422, C445/C513, C475/C491, and C503/C531. In terms of domain architecture, Kringle spans 191–274 (DCYVGDGYSY…KWEYCDVTVC (84 aa)). Residues 312-553 (IYGGFKSTAG…FLNWIKTTMH (242 aa)) form the Peptidase S1 domain. Catalysis depends on charge relay system residues H360 and D409. The Charge relay system role is filled by S507.

This sequence belongs to the peptidase S1 family. As to quaternary structure, heterodimer; disulfide-linked. Heterodimer of a 50 kDa heavy and a 27 kDa light chain linked by a disulfide bond. Post-translationally, proteolytic cleavage at Gly-23 or Met-27 can give rise to the 50 kDa heavy chain (HC) and cleavage at Arg-311 or Lys-317 can give rise to the 27 kDa light chain (LC). The HC can undergo further proteolytic cleavage giving rise to a 26 kDa fragment. The LC can undergo further proteolytic cleavage at Arg-311 leading to a 17-kDa fragment and at Arg-478 leading to a 8-kDa fragment. Liver and kidney.

Its subcellular location is the secreted. Cleaves the alpha-chain at multiple sites and the beta-chain between 'Lys-53' and 'Lys-54' but not the gamma-chain of fibrinogen and therefore does not initiate the formation of the fibrin clot and does not cause the fibrinolysis directly. It does not cleave (activate) prothrombin and plasminogen but converts the inactive single chain urinary plasminogen activator (pro-urokinase) to the active two chain form. Activates coagulation factor VII. May function as a tumor suppressor negatively regulating cell proliferation and cell migration. In Mus musculus (Mouse), this protein is Factor VII-activating protease.